A 122-amino-acid chain; its full sequence is Large ribosomal subunit protein uL14c (122 aa).

This sequence belongs to the universal ribosomal protein uL14 family. As to quaternary structure, part of the 50S ribosomal subunit.

It localises to the plastid. The protein resides in the chloroplast. Functionally, binds to 23S rRNA. This is Large ribosomal subunit protein uL14c from Staurastrum punctulatum (Green alga).